Consider the following 546-residue polypeptide: Membrane protein insertase YidC (546 aa).

The helical transmembrane segment at 8-28 (ILLATVLSVGILILWQVIFPT) threads the bilayer. Positions 31-70 (APPKPAHPPAAEVAKPAAPASPAPGAAAPAVPAPPPDAPE) are disordered. Positions 39-60 (PAAEVAKPAAPASPAPGAAAPA) are enriched in low complexity. Helical transmembrane passes span 326-346 (IDYGAVAKFFALFARGLLYVM), 356-376 (WGVAIILLTVLVRLVLFPLTY), 422-442 (LGGCLPMLLQMPVWFALYAAL), 459-479 (LTAHDPYFILPIAMGISSFVM), and 498-518 (FFPGFFTVIMLFVPGGLTLYI).

The protein belongs to the OXA1/ALB3/YidC family. Type 1 subfamily. Interacts with the Sec translocase complex via SecD. Specifically interacts with transmembrane segments of nascent integral membrane proteins during membrane integration.

Its subcellular location is the cell inner membrane. Required for the insertion and/or proper folding and/or complex formation of integral membrane proteins into the membrane. Involved in integration of membrane proteins that insert both dependently and independently of the Sec translocase complex, as well as at least some lipoproteins. Aids folding of multispanning membrane proteins. In Anaeromyxobacter dehalogenans (strain 2CP-1 / ATCC BAA-258), this protein is Membrane protein insertase YidC.